The chain runs to 322 residues: Cysteine protease YopT (322 aa).

Residues cysteine 139, histidine 258, and aspartate 274 contribute to the active site.

The protein belongs to the peptidase C58 family. Interacts with human ARHA.

It is found in the secreted. Cysteine protease, which is translocated into infected cells and plays a central role in pathogenesis by cleaving the C-terminus end of the human small GTPase RhoA/ARHA, a regulator of cytoskeleton. Once cleaved, ARHA loses its lipid modification, and is released from the cell membrane, leading to the subsequent disruption of actin cytoskeleton of the host cell. The sequence is that of Cysteine protease YopT (yopT) from Yersinia pestis.